We begin with the raw amino-acid sequence, 176 residues long: ATP synthase subunit b (176 aa).

Residues 18–38 form a helical membrane-spanning segment; it reads GVEWGTVIVTVITFAILLALL.

It belongs to the ATPase B chain family. In terms of assembly, F-type ATPases have 2 components, F(1) - the catalytic core - and F(0) - the membrane proton channel. F(1) has five subunits: alpha(3), beta(3), gamma(1), delta(1), epsilon(1). F(0) has three main subunits: a(1), b(2) and c(10-14). The alpha and beta chains form an alternating ring which encloses part of the gamma chain. F(1) is attached to F(0) by a central stalk formed by the gamma and epsilon chains, while a peripheral stalk is formed by the delta and b chains.

It is found in the cell membrane. In terms of biological role, f(1)F(0) ATP synthase produces ATP from ADP in the presence of a proton or sodium gradient. F-type ATPases consist of two structural domains, F(1) containing the extramembraneous catalytic core and F(0) containing the membrane proton channel, linked together by a central stalk and a peripheral stalk. During catalysis, ATP synthesis in the catalytic domain of F(1) is coupled via a rotary mechanism of the central stalk subunits to proton translocation. Component of the F(0) channel, it forms part of the peripheral stalk, linking F(1) to F(0). In Staphylococcus haemolyticus (strain JCSC1435), this protein is ATP synthase subunit b.